Consider the following 155-residue polypeptide: Endoribonuclease YbeY (155 aa).

Zn(2+) is bound by residues His120, His124, and His130.

This sequence belongs to the endoribonuclease YbeY family. Zn(2+) is required as a cofactor.

Its subcellular location is the cytoplasm. Functionally, single strand-specific metallo-endoribonuclease involved in late-stage 70S ribosome quality control and in maturation of the 3' terminus of the 16S rRNA. This is Endoribonuclease YbeY from Staphylococcus epidermidis (strain ATCC 12228 / FDA PCI 1200).